The sequence spans 347 residues: Protein RecA (347 aa).

65–72 contacts ATP; the sequence is GPESSGKT. Residues 328-347 are disordered; sequence SPAQPEAPAAGEKPEQEEEF.

Belongs to the RecA family.

It is found in the cytoplasm. Functionally, can catalyze the hydrolysis of ATP in the presence of single-stranded DNA, the ATP-dependent uptake of single-stranded DNA by duplex DNA, and the ATP-dependent hybridization of homologous single-stranded DNAs. It interacts with LexA causing its activation and leading to its autocatalytic cleavage. The sequence is that of Protein RecA from Vibrio parahaemolyticus serotype O3:K6 (strain RIMD 2210633).